Consider the following 578-residue polypeptide: GTP diphosphokinase CRSH3, chloroplastic (578 aa).

Residues 1–45 constitute a chloroplast transit peptide; sequence MANAGVNETVAVAVAIDAPGVGHDHGAAGEVRRPSTRRLAPAGSG. The region spanning 99 to 199 is the HD domain; sequence SVSRALVVAA…LELAVKLDAM (101 aa). EF-hand domains lie at 468 to 503 and 506 to 537; these read ATAGNVERAFQLLDKNGDGRISMEELTEIMEDLGAG and DAEELMRLLDANSDGSLSSDEFALFQKRVKLK. Positions 481, 483, 485, 487, 492, 515, 517, 519, 521, and 526 each coordinate Ca(2+).

The protein belongs to the RelA/SpoT family. Expressed in roots and shoots.

It is found in the plastid. It localises to the chloroplast. The enzyme catalyses GTP + ATP = guanosine 3'-diphosphate 5'-triphosphate + AMP. Its activity is regulated as follows. Activated by calcium. In terms of biological role, possesses calcium-dependent ppGpp (guanosine 3'-diphosphate 5'-diphosphate) synthetase activity in vitro and is able to functionally complement E.coli relA mutants. May be involved in a rapid plant ppGpp-mediated response to pathogens and other stresses. The protein is GTP diphosphokinase CRSH3, chloroplastic of Oryza sativa subsp. japonica (Rice).